A 248-amino-acid chain; its full sequence is 14-3-3 protein zeta (248 aa).

Belongs to the 14-3-3 family. As to quaternary structure, homodimer.

It is found in the cytoplasm. Its function is as follows. Adapter protein implicated in the regulation of a large spectrum of both general and specialized signaling pathways. Binds to a large number of partners, usually by recognition of a phosphoserine or phosphothreonine motif. Binding generally results in the modulation of the activity of the binding partner. This Aedes aegypti (Yellowfever mosquito) protein is 14-3-3 protein zeta (14-3-3zeta).